The primary structure comprises 323 residues: Muscleblind-like protein 3 (323 aa).

4 consecutive C3H1-type zinc fingers follow at residues 13-41 (WLTLEVCREFQRGTCSRSDAECKFAHPSR), 47-73 (NGRVIACFDSLKGRCTRENCKYLHPPP), 177-205 (TDKLEVCREFQRGNCTRGESDCRYAHPLE), and 213-239 (ENSVIVCMDYIKGRCSRDKCKYFHPPA).

Belongs to the muscleblind family. Expressed in fast and slow myotomal muscle, heart, liver, skin, brain and testis.

Its subcellular location is the nucleus. It localises to the cytoplasm. In terms of biological role, involved in pre-mRNA alternative splicing regulation. Could inhibit terminal muscle differentiation, acting at approximately the time of myogenin induction. This Takifugu rubripes (Japanese pufferfish) protein is Muscleblind-like protein 3 (mbnl3).